We begin with the raw amino-acid sequence, 723 residues long: Transmembrane channel-like protein 7 (723 aa).

A disordered region spans residues 1 to 21 (MSESSASALQLGRPSRQPAVH). Residues 1–168 (MSESSASALQ…GIQSYFSFLR (168 aa)) are Extracellular-facing. Asn24 is a glycosylation site (N-linked (GlcNAc...) asparagine). Positions 51 to 70 (RRRTTVHSRDKQSGTLLKST) are disordered. A glycan (N-linked (GlcNAc...) asparagine) is linked at Asn84. Ser89 is modified (phosphoserine). Asn96 carries N-linked (GlcNAc...) asparagine glycosylation. A helical transmembrane segment spans residues 169 to 189 (FLVLLNLVIFLIIFMLVLLPI). Over 190–219 (LLTKYKITNSSFVLIPFKDTDIQCTVYPVS) the chain is Cytoplasmic. Residues 220 to 240 (SSGLIYFYSYIIDLLSGTGFL) traverse the membrane as a helical segment. The Extracellular portion of the chain corresponds to 241–263 (EETSLFYGHYTIDGVKFQNFTYD). Asn259 carries an N-linked (GlcNAc...) asparagine glycan. A helical membrane pass occupies residues 264–284 (LPLAYLISTIAYLALSLLWIV). The Cytoplasmic portion of the chain corresponds to 285–362 (KRSVEGFKIN…EETIRIYSLR (78 aa)). A helical transmembrane segment spans residues 363–383 (LFLNCIVLAVLGACFYAIYVA). Topologically, residues 384–404 (TVFSQEHMKKEIDKMVFGENL) are extracellular. The helical transmembrane segment at 405–425 (LILYLPSIVITLANFITPMIF) threads the bilayer. The Cytoplasmic segment spans residues 426-494 (AKIIRYEDYS…PCWETQVGQE (69 aa)). The helical transmembrane segment at 495 to 515 (MYKLMIFDFIIILAVTLFVDF) threads the bilayer. At 516–555 (PRKLLVTYCSSWKLIQCWGQQEFAIPDNVLGIVYGQTICW) the chain is on the extracellular side. A helical transmembrane segment spans residues 556-576 (IGAFFSPLLPAIATLKFIIIF). Over 577–601 (YVKEWSLLYTCRPSPRPFRASNSNF) the chain is Cytoplasmic. Residues 602–622 (FFLLVLLIGLCLAIIPLTISI) traverse the membrane as a helical segment. The Extracellular segment spans residues 623-665 (SRIPSSKACGPFTNFNTTWEVIPKTVSTFPSSLQSFIHGVTSE). Asn638 carries N-linked (GlcNAc...) asparagine glycosylation. A helical membrane pass occupies residues 666-686 (AFAVPFFMIICLIMFYFIALA). Over 687–723 (GAHKRVVIQLREQLSLESRDKRYLIQKLTEAQRDTRN) the chain is Cytoplasmic.

It belongs to the TMC family. As to quaternary structure, interacts with PIEZO2; the interaction inhibits PIEZO2-conducted mechanically activated currents.

It localises to the membrane. Acts as an inhibitory modulator of PIEZO2 mechanosensitive channel in dorsal root ganglion (DRG) neurons through physical interactions or interference with the interaction between Piezo2 and the cytoskeleton. The sequence is that of Transmembrane channel-like protein 7 (TMC7) from Macaca fascicularis (Crab-eating macaque).